The following is a 425-amino-acid chain: Adenosine 3'-phospho 5'-phosphosulfate transporter 1 (425 aa).

Helical transmembrane passes span 27-47 (FLILLGYSTVATPAAILIYYV), 102-122 (VIILLLFFFSGIQVTLVAMGV), 147-167 (TQFLIFCNRIVALVLSLMILA), 232-252 (YSWFEYGCGCTIAFGASLFLL), 263-283 (ITYTSFSGMILMAGYLLFDAF), 303-323 (MMFGVNFFSAILCAVSLIEQG), 342-360 (VFLLSLSGAIGQIFIYSTI), 365-387 (PIVFAVIMTIRQMLSIVLSTIMY), and 391-411 (LTFLAAIGFMIVFAAIFVDIH).

Belongs to the nucleotide-sugar transporter family. SLC35B subfamily.

It is found in the golgi apparatus membrane. Its function is as follows. Mediates the transport of adenosine 3'-phospho 5'-phosphosulfate (PAPS), from cytosol into Golgi. PAPS is a universal sulfuryl donor for sulfation events that take place in the Golgi. The sequence is that of Adenosine 3'-phospho 5'-phosphosulfate transporter 1 (pst-1) from Caenorhabditis elegans.